The chain runs to 481 residues: Phosphoglucosamine mutase (481 aa).

Ser-128 serves as the catalytic Phosphoserine intermediate. 4 residues coordinate Mg(2+): Ser-128, Asp-269, Asp-271, and Asp-273. Ser-128 carries the phosphoserine modification.

This sequence belongs to the phosphohexose mutase family. The cofactor is Mg(2+). Post-translationally, activated by phosphorylation.

The enzyme catalyses alpha-D-glucosamine 1-phosphate = D-glucosamine 6-phosphate. Catalyzes the conversion of glucosamine-6-phosphate to glucosamine-1-phosphate. The chain is Phosphoglucosamine mutase from Synechocystis sp. (strain ATCC 27184 / PCC 6803 / Kazusa).